The chain runs to 650 residues: L-aspartate N-monooxygenase (nitrosuccinate-forming) (650 aa).

It belongs to the nitrosuccinic acid synthase family. It depends on FAD as a cofactor.

The enzyme catalyses L-aspartate + 3 NADPH + 3 O2 + 2 H(+) = 2-nitrobutanedioate + 3 NADP(+) + 4 H2O. Functionally, involved in the biosynthesis of desferrioxamine derivatives which have iron-binding properties and may act as siderophores. Catalyzes the iterative oxidation of L-aspartic acid to nitrosuccinic acid (2-nitrobutanedioate) via N-hydroxyaspartic acid and nitrososuccinic acid. This chain is L-aspartate N-monooxygenase (nitrosuccinate-forming), found in Streptomyces davaonensis (strain DSM 101723 / JCM 4913 / KCC S-0913 / 768).